We begin with the raw amino-acid sequence, 410 residues long: F-box protein At3g19890 (410 aa).

The 48-residue stretch at 2 to 49 (TMISDLSKDLVEEILSKAPITSLGAVRSTHKQWNALSKGRLLYKAEAK) folds into the F-box domain. Residues 386-410 (EDKCKSIKMVDTKRQRKKRKRKSKR) are disordered. The span at 387 to 398 (DKCKSIKMVDTK) shows a compositional bias: basic and acidic residues. A compositionally biased stretch (basic residues) spans 399 to 410 (RQRKKRKRKSKR).

The sequence is that of F-box protein At3g19890 from Arabidopsis thaliana (Mouse-ear cress).